Here is a 143-residue protein sequence, read N- to C-terminus: Phosphoribosyl-AMP cyclohydrolase (143 aa).

Asp86 lines the Mg(2+) pocket. Zn(2+) is bound at residue Cys87. Mg(2+) is bound by residues Asp88 and Asp90. Residues Cys103 and Cys110 each coordinate Zn(2+).

This sequence belongs to the PRA-CH family. In terms of assembly, homodimer. It depends on Mg(2+) as a cofactor. Zn(2+) serves as cofactor.

Its subcellular location is the cytoplasm. It carries out the reaction 1-(5-phospho-beta-D-ribosyl)-5'-AMP + H2O = 1-(5-phospho-beta-D-ribosyl)-5-[(5-phospho-beta-D-ribosylamino)methylideneamino]imidazole-4-carboxamide. Its pathway is amino-acid biosynthesis; L-histidine biosynthesis; L-histidine from 5-phospho-alpha-D-ribose 1-diphosphate: step 3/9. Functionally, catalyzes the hydrolysis of the adenine ring of phosphoribosyl-AMP. This Rhodospirillum rubrum (strain ATCC 11170 / ATH 1.1.1 / DSM 467 / LMG 4362 / NCIMB 8255 / S1) protein is Phosphoribosyl-AMP cyclohydrolase.